We begin with the raw amino-acid sequence, 380 residues long: Glutamine synthetase, chloroplastic (380 aa).

Residues 35–125 form the GS beta-grasp domain; the sequence is MAAEYIWADG…VMCEVFAPDG (91 aa). Residues 132–380 enclose the GS catalytic domain; sequence TRAKLREIID…RLLIKTVLKG (249 aa).

It belongs to the glutamine synthetase family. In terms of assembly, homooctamer.

Its subcellular location is the plastid. It is found in the chloroplast. It catalyses the reaction L-glutamate + NH4(+) + ATP = L-glutamine + ADP + phosphate + H(+). This is Glutamine synthetase, chloroplastic (GLN2) from Chlamydomonas reinhardtii (Chlamydomonas smithii).